The following is a 485-amino-acid chain: Chitin synthase regulator 2 (485 aa).

Sel1-like repeat units follow at residues 164–202, 203–238, 239–275, 279–316, 317–353, 354–391, and 392–427; these read PDAQ…KHGH, PDAC…VGLH, PGAM…EHAT, PHAL…ELGY, APSA…QQDH, KDAC…ELGL, and AKAQ…EGGD. Residues 460–485 form a disordered region; the sequence is AANLAQRSGSGSGASGKDGKDGCLIM. Basic and acidic residues predominate over residues 476 to 485; it reads KDGKDGCLIM. Cysteine methyl ester is present on Cys-482. Cys-482 carries S-farnesyl cysteine lipidation. A propeptide spans 483–485 (removed in mature form); it reads LIM.

Belongs to the SKT5 family.

It is found in the cell membrane. In terms of biological role, activator of the chitin synthase CHS3 which polymerizes chitin, a structural polymer of the fungal cell wall. Chitin produced by CHS3 is deacetylated to chitosan, which helps to maintain cell wall integrity, anchor melanin, and offers an advantage during infection, as chitosan is less readily detected by host immunosurveillance. The chain is Chitin synthase regulator 2 from Cryptococcus neoformans var. grubii serotype A (strain H99 / ATCC 208821 / CBS 10515 / FGSC 9487) (Filobasidiella neoformans var. grubii).